Consider the following 68-residue polypeptide: Large ribosomal subunit protein uL29 (68 aa).

It belongs to the universal ribosomal protein uL29 family.

This chain is Large ribosomal subunit protein uL29, found in Picosynechococcus sp. (strain ATCC 27264 / PCC 7002 / PR-6) (Agmenellum quadruplicatum).